A 299-amino-acid chain; its full sequence is Glycine--tRNA ligase alpha subunit (299 aa).

The protein belongs to the class-II aminoacyl-tRNA synthetase family. In terms of assembly, tetramer of two alpha and two beta subunits.

The protein resides in the cytoplasm. It catalyses the reaction tRNA(Gly) + glycine + ATP = glycyl-tRNA(Gly) + AMP + diphosphate. The chain is Glycine--tRNA ligase alpha subunit from Caulobacter vibrioides (strain ATCC 19089 / CIP 103742 / CB 15) (Caulobacter crescentus).